Reading from the N-terminus, the 876-residue chain is DNA polymerase I (876 aa).

The 5'-3' exonuclease domain occupies 1-310 (MKNKLVLIDG…FAIADSVTDE (310 aa)). The subtilisin large fragment stretch occupies residues 289 to 876 (TDEGEKPLAG…HYGPTWYDAK (588 aa)). The segment at 469–876 (EQDRLLTELE…HYGPTWYDAK (408 aa)) is polymerase.

This sequence belongs to the DNA polymerase type-A family. In terms of assembly, single-chain monomer with multiple functions.

The catalysed reaction is DNA(n) + a 2'-deoxyribonucleoside 5'-triphosphate = DNA(n+1) + diphosphate. In terms of biological role, in addition to polymerase activity, the recombinant enzyme has strand displacement and 5'-3' exonuclease activity, but lacks proofreading 3'-5' exonuclease activity. This Geobacillus stearothermophilus (Bacillus stearothermophilus) protein is DNA polymerase I (polA).